Here is a 253-residue protein sequence, read N- to C-terminus: Mediator of RNA polymerase II transcription subunit 19 (253 aa).

Disordered regions lie at residues 18–49 (EQYSPKSSPRAGGAGGRSPVVARQDSSGTLKT) and 157–253 (GPLP…TQVF). The segment covering 21–40 (SPKSSPRAGGAGGRSPVVAR) has biased composition (low complexity). 2 stretches are compositionally biased toward basic residues: residues 165–183 (HLKSVPTRKHKNKHKKHKY) and 220–233 (RKKRKKEKKRKKQR).

It belongs to the Mediator complex subunit 19 family. Component of the Mediator complex.

Its subcellular location is the nucleus. Functionally, component of the Mediator complex, a coactivator involved in the regulated transcription of nearly all RNA polymerase II-dependent genes. Mediator functions as a bridge to convey information from gene-specific regulatory proteins to the basal RNA polymerase II transcription machinery. Mediator is recruited to promoters by direct interactions with regulatory proteins and serves as a scaffold for the assembly of a functional preinitiation complex with RNA polymerase II and the general transcription factors. This is Mediator of RNA polymerase II transcription subunit 19 (MED19) from Aedes aegypti (Yellowfever mosquito).